The chain runs to 1350 residues: MGKKKIDINTREDLFLSYYKEIEKNKFDLLKICSDKNFSKSNFLKAVHCLFSLSYFCKIKDENEEEEGKEEEINDYKVKKSTTGNYYRNSEGKLFKKSNEKDQIDDVSIFYKRLPTIQDFKDTYDKYENCLNSVYYIIRKIKLLHLEYFWEILASCYGTISFIKFFNIFSNEIFSPSENGDSVFIMVGKFFRRKVRAETHYDLIFLKIILANASIPMILKLGVKDIGRFTEKEDIIVSYYRNFSIIHSLRFDNVKEFALVYKTLKNNYPSKKKKKITLFEENGKINVKTSKKDLMLFEFVCKFDCVKIFKKYFLPKPQIINNNDNNEMLECISSGSYSGFDEKSKRKIRIFFSICCRQISPKILKCIVDYVKDDIGFLDLQNRQDIYIGDSAPEKVLFLNCFFGNHKEQRVIDFFNLLTSKSIIICNTIKEKPELYDYRYITLSTVDSTFYFSDSHKGADFGVYTDEINVIINNDDIDYDYIGDDDNDEEIEETKDYGSSSSDIDDFYNVFEPKASMIPNILDSCSLEILKAYIQNITGNGLFKISPSLFLAHDVTRLVRNPKPKTETVVKILEFINTISRLSELSTNGVPFTFLTNRFEIVTSIIMSLHDERSISNSVEPVQWLRALAPFVSNDEMKLIIYKVRTLYNYEPHSNGEIKYTELVRLFDVQYLLTKGKFSLSQFNGFETSIFLNPKLLDGTINSNILNSMIIKDKEKLDLKELFFKEKPLSEAELKEKFEIATKNEKELLDQLKKENDAEKLKKKNKLKKQKNQQQQQQAKQQAQQQKQQHQQNIQQNYENQHIEDQRKFNQQTKGRPISPSSIQNQNLNPTLLQNQNQTSNPTPNLESTKKATPTTTTTTTTNSNTSAIINEIKNQDLNQQQNITENINEIYDVSIGKFKFNKKESNILGRGSNGTLVFKGIWNNRIPVAIKQMQKMFNPLISKEIEILIGLTNKNLNLVGYIDQEEDENCVYLGLTLCDGSLQSLYDQSKLNEFINQNNNQNNNNNNNRVLDLIIGMINGVIFLHDQNIVHNDLNPRNILVKDNRLIISDLGLSKMNVSSTYNFSTNAIPTGQDGYHPVEVLLEKRKTKSVDVFSLGCLIYFIMTNGAHPFGDKFSRLRYITKSKYNLSQLSNLNLVATHLIELMISYDESKRPTLSSVLKHPLFWDSLKKIKFLESSLRLLGDHDFKKFNINKILISCNSNSSSSNSICNSSNSSSSSSSSISSSSCKISSSSCYCVPLPWNQSLDYQLVDSLSNQIEKKVASYKFDQLHDLIRFIRNTLQHYNQIYRDLKQILPNSDILESLKSQQSALNYFESKFPTLIIFLFNHFSAIPEIKNSIHFSNDTCSIF.

Asn-37 is a glycosylation site (N-linked (GlcNAc...) asparagine). A helical membrane pass occupies residues Phe-149 to Phe-169. A coiled-coil region spans residues Glu-731–His-802. Over residues Leu-761–Lys-771 the composition is skewed to basic residues. Disordered stretches follow at residues Leu-761 to Gln-795 and Arg-807 to Ser-864. The segment covering Asn-772–Gln-795 has biased composition (low complexity). Over residues Phe-809–Ile-823 the composition is skewed to polar residues. Low complexity predominate over residues Gln-824–Ser-864. Positions Lys-903 to Phe-1166 constitute a Protein kinase domain. Residues Leu-909 to Leu-917 and Lys-932 each bind ATP. Asp-1034 acts as the Proton acceptor in catalysis. The region spanning Ser-1169–Thr-1346 is the KEN domain.

It belongs to the protein kinase superfamily. Ser/Thr protein kinase family.

The protein localises to the membrane. It catalyses the reaction L-seryl-[protein] + ATP = O-phospho-L-seryl-[protein] + ADP + H(+). The enzyme catalyses L-threonyl-[protein] + ATP = O-phospho-L-threonyl-[protein] + ADP + H(+). The polypeptide is Probable serine/threonine-protein kinase irlE (irlE) (Dictyostelium discoideum (Social amoeba)).